The sequence spans 430 residues: Shufflon protein A' (430 aa).

Positions 1 to 361 (MKKYDRGWAS…TGAILSCQSG (361 aa)) are constant region. The interval 362-430 (TWGTIGGKLK…GCIASCVTLN (69 aa)) is variable region.

The sequence is that of Shufflon protein A' from Escherichia coli.